We begin with the raw amino-acid sequence, 143 residues long: Large ribosomal subunit protein uL11 (143 aa).

It belongs to the universal ribosomal protein uL11 family. In terms of assembly, part of the ribosomal stalk of the 50S ribosomal subunit. Interacts with L10 and the large rRNA to form the base of the stalk. L10 forms an elongated spine to which L12 dimers bind in a sequential fashion forming a multimeric L10(L12)X complex. In terms of processing, one or more lysine residues are methylated.

Functionally, forms part of the ribosomal stalk which helps the ribosome interact with GTP-bound translation factors. The protein is Large ribosomal subunit protein uL11 of Clavibacter sepedonicus (Clavibacter michiganensis subsp. sepedonicus).